The chain runs to 1183 residues: Probable RNA-dependent RNA polymerase 4 (1183 aa).

This sequence belongs to the RdRP family. As to expression, expressed in shoot apical meristem (SAM) and panicles.

It catalyses the reaction RNA(n) + a ribonucleoside 5'-triphosphate = RNA(n+1) + diphosphate. Probably involved in the RNA silencing pathway and required for the generation of small interfering RNAs (siRNAs). This Oryza sativa subsp. japonica (Rice) protein is Probable RNA-dependent RNA polymerase 4 (RDR4).